Here is a 97-residue protein sequence, read N- to C-terminus: Coiled-coil domain-containing protein 167 (97 aa).

The stretch at 36–80 (LRKMELTEEGRKSLEKEKSSLSSRLSNYERELKSLRHENRKNMLL) forms a coiled coil. A helical membrane pass occupies residues 78 to 95 (MLLSVAIFLLFAVGYYCW).

The protein localises to the membrane. The protein is Coiled-coil domain-containing protein 167 (ccdc167) of Xenopus tropicalis (Western clawed frog).